The following is a 513-amino-acid chain: MTLSPTTMAAVRASGAVPKSEYLLTAEGVRKEFPGVVALDDVEFKLKRGTVHALMGENGAGKSTLMKILAGIYYPDQGEVKLRGAGIRLKSPLDALENGIAMIHQELNLMPFMTVAENIWIRREPKNRFGFVDHGEMRRMTAKLFERLKIDLDPEIEVRHLSVANRQMVEIAKAVSYESDVLIMDEPTSALTEREVAHLFEIIRDLRSQGIGIVYITHKMNELFEIADEFSVFRDGKYIGTHLSNEVTRDDIIRMMVGREITQMFPKEEVPIGDVVLSVKNLTLNGVFRDVSFDVRAGEILGVAGLVGSGRSNVAETLFGVTPASSGTIAIDGKEVVIDSANKAIRHRMAFLTEDRKDTGCLLILDILENMQIAVLQDKFVKRGFVSEREVTAACEEMSRKLRVKTPNLQERVENLSGGNQQKVLIGRWLLTNPRILILDEPTRGIDVGAKAEIHRLVTELARNGVAVIMISSEMPEVLGMSDRIMVMHEGRVTGILDRAEATQIKVMELAAR.

ABC transporter domains lie at 24-260 and 270-510; these read LTAE…VGRE and VPIG…VMEL. 56–63 contributes to the ATP binding site; that stretch reads GENGAGKS.

It belongs to the ABC transporter superfamily. Carbohydrate importer 2 (CUT2) (TC 3.A.1.2) family.

The protein localises to the cell inner membrane. The enzyme catalyses D-ribose(out) + ATP + H2O = D-ribose(in) + ADP + phosphate + H(+). The catalysed reaction is D-galactose(out) + ATP + H2O = D-galactose(in) + ADP + phosphate + H(+). Its function is as follows. Part of an ABC transporter complex involved in carbohydrate import. Could be involved in ribose, galactose and/or methyl galactoside import. Responsible for energy coupling to the transport system. This chain is Putative ribose/galactose/methyl galactoside import ATP-binding protein 2, found in Rhizobium meliloti (strain 1021) (Ensifer meliloti).